The chain runs to 308 residues: Glutaminase (308 aa).

7 residues coordinate substrate: S68, N118, E162, N169, Y193, Y244, and V262.

The protein belongs to the glutaminase family. As to quaternary structure, homotetramer.

The catalysed reaction is L-glutamine + H2O = L-glutamate + NH4(+). This Hahella chejuensis (strain KCTC 2396) protein is Glutaminase.